We begin with the raw amino-acid sequence, 61 residues long: Large ribosomal subunit protein uL30 (61 aa).

Belongs to the universal ribosomal protein uL30 family. In terms of assembly, part of the 50S ribosomal subunit.

The protein is Large ribosomal subunit protein uL30 of Parafrankia sp. (strain EAN1pec).